A 250-amino-acid polypeptide reads, in one-letter code: Beta-crystallin B1 (250 aa).

The interval 1–47 is disordered; the sequence is MSQVAKAAATTAVNPGPDGKGKGTPSTGTAPAPGPTPVPASVPRPAA. Ser2 carries the post-translational modification N-acetylserine. The segment at 2–56 is N-terminal arm; it reads SQVAKAAATTAVNPGPDGKGKGTPSTGTAPAPGPTPVPASVPRPAAKVGELPPGS. A compositionally biased stretch (pro residues) spans 32-42; that stretch reads APGPTPVPASV. 2 Beta/gamma crystallin 'Greek key' domains span residues 57 to 96 and 97 to 141; these read YRLV…IVLS and GPWV…RPIR. Residues 142 to 146 form a connecting peptide region; the sequence is MDSQE. Beta/gamma crystallin 'Greek key' domains follow at residues 147–188 and 189–231; these read HKIC…TVSS and GTWV…RRLR. The tract at residues 233–250 is C-terminal arm; sequence RQWHQEGCFPVLTAEPPK.

The protein belongs to the beta/gamma-crystallin family. Homo/heterodimer, or complexes of higher-order. The structure of beta-crystallin oligomers seems to be stabilized through interactions between the N-terminal arms. Specific cleavages in the N-terminal arm occur during lens maturation and give rise to truncated forms, leading to impaired oligomerization and protein insolubilization. The protease responsible for this partial degradation could be calpain II.

In terms of biological role, crystallins are the dominant structural components of the vertebrate eye lens. This chain is Beta-crystallin B1 (Crybb1), found in Rattus norvegicus (Rat).